Reading from the N-terminus, the 446-residue chain is MDRQKEFVLRTLEERDIRFVRLWFTDVLGFLKSVAIAPAELEGAFEEGIGFDGSSIEGFARVSESDTVAHPDPSTFQVLPWATSSGHHHSARMFCDITMPDGSPSWADPRHVLRRQLTKAGELGFSCYVHPEIEFFLLKPGPEDGSVPVPVDNAGYFDQAVHDSALNFRRHAIDALEFMGISVEFSHHEGAPGQQEIDLRFADALSMADNVMTFRYVIKEVALEEGARASFMPKPFGQHPGSAMHTHMSLFEGDVNAFHSADDPLQLSEVGKSFIAGILEHACEISAVTNQWVNSYKRLVQGGEAPTAASWGAANRSALVRVPMYTPHKTSSRRVEVRSPDSACNPYLTFAVLLAAGLRGVEKGYVLGPQAEDNVWDLTPEERRAMGYRELPSSLDSALRAMEASELVAEALGEHVFDFFLRNKRTEWANYRSHVTPYELRTYLSL.

Residues 15-102 enclose the GS beta-grasp domain; it reads RDIRFVRLWF…MFCDITMPDG (88 aa). The region spanning 109–446 is the GS catalytic domain; it reads PRHVLRRQLT…PYELRTYLSL (338 aa). Residues Glu-132 and Glu-134 each coordinate Mg(2+). Position 184 (Glu-184) interacts with ATP. Mg(2+) contacts are provided by Glu-189 and Glu-196. Position 241 (Gly-241) interacts with L-glutamate. Residue His-245 participates in Mg(2+) binding. ATP contacts are provided by residues 247–249 and Ser-249; that span reads HMS. 3 residues coordinate L-glutamate: Arg-298, Glu-304, and Arg-316. ATP-binding residues include Arg-316 and Arg-321. Glu-336 contacts Mg(2+). Arg-338 lines the L-glutamate pocket.

The protein belongs to the glutamine synthetase family. Oligomer of 12 subunits arranged in the form of two hexagons. In its feedback-inhibited form, interacts with TnrA in order to block its DNA-binding activity. Mg(2+) serves as cofactor.

The protein localises to the cytoplasm. It carries out the reaction L-glutamate + NH4(+) + ATP = L-glutamine + ADP + phosphate + H(+). With respect to regulation, inhibited by glutamine. In terms of biological role, glutamine synthetase (GS) is an unusual multitasking protein that functions as an enzyme, a transcription coregulator, and a chaperone in ammonium assimilation and in the regulation of genes involved in nitrogen metabolism. It catalyzes the ATP-dependent biosynthesis of glutamine from glutamate and ammonia. Feedback-inhibited GlnA also interacts with and regulates the activity of the transcriptional regulator TnrA. During nitrogen limitation, TnrA is in its DNA-binding active state and turns on the transcription of genes required for nitrogen assimilation. Under conditions of nitrogen excess, feedback-inhibited GlnA forms a stable complex with TnrA, which inhibits its DNA-binding activity. In contrast, feedback-inhibited GlnA acts as a chaperone to stabilize the DNA-binding activity of GlnR, which represses the transcription of nitrogen assimilation genes. The polypeptide is Glutamine synthetase (Mycobacterium bovis (strain ATCC BAA-935 / AF2122/97)).